Here is a 331-residue protein sequence, read N- to C-terminus: Putative phosphoribosylaminoimidazole-succinocarboxamide synthase (331 aa).

It belongs to the SAICAR synthetase family. Highly divergent.

The catalysed reaction is 5-amino-1-(5-phospho-D-ribosyl)imidazole-4-carboxylate + L-aspartate + ATP = (2S)-2-[5-amino-1-(5-phospho-beta-D-ribosyl)imidazole-4-carboxamido]succinate + ADP + phosphate + 2 H(+). Its pathway is purine metabolism; IMP biosynthesis via de novo pathway; 5-amino-1-(5-phospho-D-ribosyl)imidazole-4-carboxamide from 5-amino-1-(5-phospho-D-ribosyl)imidazole-4-carboxylate: step 1/2. In Archaeoglobus fulgidus (strain ATCC 49558 / DSM 4304 / JCM 9628 / NBRC 100126 / VC-16), this protein is Putative phosphoribosylaminoimidazole-succinocarboxamide synthase (purC).